We begin with the raw amino-acid sequence, 1847 residues long: Cilia- and flagella-associated protein 65 (1847 aa).

Residues 112-132 traverse the membrane as a helical segment; sequence FFTIIPQPIFLSPGITLTLPI. The 110-residue stretch at 805 to 914 folds into the MSP domain; that stretch reads DLKLDTHKSI…VHYRIRLVGM (110 aa). Positions 1457–1483 form a coiled coil; it reads QRELMRQYHKELQEWNEEKARQEVEFT. A disordered region spans residues 1668 to 1721; it reads YEGRKSKEQEEDLFGKMPGGQEDDEEEEEDEEEAEEEEEEIEEEMSKDEEDIDK. A compositionally biased stretch (acidic residues) spans 1688–1720; the sequence is QEDDEEEEEDEEEAEEEEEEIEEEMSKDEEDID.

The protein belongs to the CFAP65 family. Interacts with CFAP47. In terms of tissue distribution, predominantly expressed in testis. Highly expressed in round and elongating spermatids. Expressed also in certain ciliated organs, such as the brain, lung and kidney.

The protein localises to the cell projection. It is found in the cilium. It localises to the flagellum membrane. The protein resides in the cytoplasmic vesicle. Its subcellular location is the secretory vesicle. The protein localises to the acrosome membrane. It is found in the cytoplasm. Plays a role in flagellar formation and sperm motility. The chain is Cilia- and flagella-associated protein 65 from Mus musculus (Mouse).